The following is a 675-amino-acid chain: PML-RARA-regulated adapter molecule 1 (675 aa).

The span at 1 to 19 shows a compositional bias: polar residues; it reads MGSNQDFRNLQAKFQTSQP. 2 disordered regions span residues 1-473 and 523-562; these read MGSN…GPIN and TDDS…PQQL. Positions 23–35 are enriched in basic and acidic residues; it reads ELFRKTPKPELNK. Residues 43 to 58 show a composition bias toward polar residues; it reads TELSEQPKKSSQSELS. Basic and acidic residues predominate over residues 141–150; the sequence is PKPEFGELSK. Composition is skewed to polar residues over residues 224-242, 251-264, and 322-331; these read RKSQ…SPSK, HSPQ…PKNN, and LQPSDLTRAS. Residue Ser374 is modified to Phosphoserine. Residues 407–422 show a composition bias toward polar residues; the sequence is SECSLPSASAGSSPQC. A compositionally biased stretch (pro residues) spans 462-471; that stretch reads PAKPALPPGP. Positions 537–546 are enriched in polar residues; that stretch reads LSTQQATRWP. Residues 578–656 form the SH3 domain; the sequence is KAEREFRKKF…PRTALLPLET (79 aa).

In terms of assembly, interacts with SKAP2, LCP2 and DBNL. May interact with LYN. Interacts with NEK6. May be phosphorylated on tyrosines. Expressed in bone marrow and mature neutrophils. Weakly expressed in macrophages and mast cells.

In terms of biological role, may be involved in integrin signaling in neutrophils. Binds to PtdIns(4)P. The sequence is that of PML-RARA-regulated adapter molecule 1 (Pram1) from Mus musculus (Mouse).